Here is a 130-residue protein sequence, read N- to C-terminus: Probable 4-amino-4-deoxy-L-arabinose-phosphoundecaprenol flippase subunit ArnF (130 aa).

At 1–4 (MRGY) the chain is on the cytoplasmic side. Residues 5–25 (AWGAASVLLVTLAQLLMKWGM) traverse the membrane as a helical segment. Over 26 to 47 (AQIPLMSFADVTLNLFMQYWLP) the chain is Periplasmic. The chain crosses the membrane as a helical span at residues 48-68 (LVVVSGGIFGYALSMLCWFFA). The Cytoplasmic portion of the chain corresponds to 69–77 (LHHLPLNRA). A helical membrane pass occupies residues 78–98 (YPLLSVSYALVYLAAVILPWF). Asn99 is a topological domain (periplasmic). Residues 100 to 120 (ESATLLKTLGTLFILFGVWLI) form a helical membrane-spanning segment. The Cytoplasmic segment spans residues 121-130 (NSQAKVKTPQ).

This sequence belongs to the ArnF family. In terms of assembly, heterodimer of ArnE and ArnF.

It is found in the cell inner membrane. It participates in bacterial outer membrane biogenesis; lipopolysaccharide biosynthesis. Functionally, translocates 4-amino-4-deoxy-L-arabinose-phosphoundecaprenol (alpha-L-Ara4N-phosphoundecaprenol) from the cytoplasmic to the periplasmic side of the inner membrane. The sequence is that of Probable 4-amino-4-deoxy-L-arabinose-phosphoundecaprenol flippase subunit ArnF from Serratia proteamaculans (strain 568).